The following is a 156-amino-acid chain: Small ribosomal subunit protein uS7 (156 aa).

This sequence belongs to the universal ribosomal protein uS7 family. As to quaternary structure, part of the 30S ribosomal subunit. Contacts proteins S9 and S11.

Its function is as follows. One of the primary rRNA binding proteins, it binds directly to 16S rRNA where it nucleates assembly of the head domain of the 30S subunit. Is located at the subunit interface close to the decoding center, probably blocks exit of the E-site tRNA. The polypeptide is Small ribosomal subunit protein uS7 (Idiomarina loihiensis (strain ATCC BAA-735 / DSM 15497 / L2-TR)).